A 313-amino-acid polypeptide reads, in one-letter code: UDP-N-acetylglucosamine 3-dehydrogenase (313 aa).

NAD(+) is bound by residues histidine 13, leucine 14, and arginine 38.

Belongs to the Gfo/Idh/MocA family. Exists in multiple oligomeric states.

The catalysed reaction is UDP-N-acetyl-alpha-D-glucosamine + NAD(+) = UDP-2-acetamido-3-dehydro-2-deoxy-alpha-D-glucopyranose + NADH + H(+). The protein operates within bacterial outer membrane biogenesis; LPS lipid A biosynthesis. Oxidoreductase involved in the synthesis of 2,3-diamino-2,3-dideoxy-D-glucopyranose (GlcN3N), which is a component of lipid A in some species. Catalyzes the NAD(+)-dependent oxidation of the glucosamine 3-position of UDP-N-acetyl-glucosamine (UDP-GlcNAc) to a ketone moiety, forming UDP-2-acetamido-3-dehydro-2-deoxy-alpha-D-glucopyranose (UDP-3-oxo-GlcNAc). Is specific for UDP-GlcNAc, no activity is observed with UDP-glucose (UDP-Glc), UDP-glucoronic acid (UDP-GlcA), UDP-galactose (UDP-Gal) and UDP-N-acetylgalactosamine (UDP-GalNAc). Cannot use FAD(+) and NADP(+). The polypeptide is UDP-N-acetylglucosamine 3-dehydrogenase (Acidithiobacillus ferrooxidans (strain ATCC 23270 / DSM 14882 / CIP 104768 / NCIMB 8455) (Ferrobacillus ferrooxidans (strain ATCC 23270))).